Reading from the N-terminus, the 261-residue chain is UPF0246 protein Reut_A1014 (261 aa).

It belongs to the UPF0246 family.

This is UPF0246 protein Reut_A1014 from Cupriavidus pinatubonensis (strain JMP 134 / LMG 1197) (Cupriavidus necator (strain JMP 134)).